The primary structure comprises 357 residues: Protein RecA (357 aa).

Position 67–74 (glycine 67–threonine 74) interacts with ATP. Residues asparagine 333–phenylalanine 357 are disordered. Over residues alanine 348–phenylalanine 357 the composition is skewed to acidic residues.

The protein belongs to the RecA family.

Its subcellular location is the cytoplasm. Can catalyze the hydrolysis of ATP in the presence of single-stranded DNA, the ATP-dependent uptake of single-stranded DNA by duplex DNA, and the ATP-dependent hybridization of homologous single-stranded DNAs. It interacts with LexA causing its activation and leading to its autocatalytic cleavage. This is Protein RecA from Pectobacterium carotovorum subsp. carotovorum (strain PC1).